The following is a 502-amino-acid chain: Acetylcholine receptor subunit alpha-type unc-63 (502 aa).

The signal sequence occupies residues 1–23; it reads MGPNDHGFAYILIFLLLSPPTHA. Topologically, residues 24–263 are extracellular; it reads NRDANRLFED…HLRRKTLFYT (240 aa). A glycan (N-linked (GlcNAc...) asparagine) is linked at N136. A disulfide bond links C151 and C165. A run of 3 helical transmembrane segments spans residues 264-284, 293-313, and 326-346; these read VNLIFPSVGISFLTALVFYLP, LCISILISLTVFFLLLVEIIP, and LLFTMVLVTLSVVVTVVTLNV. Over 347 to 470 the chain is Cytoplasmic; it reads HYRSPTTHTM…WKYISVVMDR (124 aa). The chain crosses the membrane as a helical span at residues 471–491; sequence IFLITFTFACAFGTVVIIARA.

This sequence belongs to the ligand-gated ion channel (TC 1.A.9) family. Acetylcholine receptor (TC 1.A.9.1) subfamily. As to quaternary structure, component of nicotinic acetylcholine receptor. In muscles, composed of 2 non-alpha subunits lev-1 and unc-29, and 3 alpha subunits unc-38, unc-63 and lev-8. In cholinergic motoneurons, composed of 2 non-alpha subunits acr-2 and acr-3, and 3 alpha subunits unc-38, unc-63 and acr-12. Interacts with lev-10. As to expression, expressed in body wall muscles, in vulval muscles and in neurons.

It is found in the postsynaptic cell membrane. The protein localises to the cell membrane. In terms of biological role, alpha subunit of nicotinic acetylcholine receptor (nAChR). Probably acts in cholinergic motoneurons to regulate presynaptic neurotransmitter release, thereby ensuring normal level of excitation of cholinergic motoneurons during locomotion. Involved in nAChR sensitivity to nicotine and levamisole. This Caenorhabditis elegans protein is Acetylcholine receptor subunit alpha-type unc-63 (unc-63).